The chain runs to 298 residues: Aspartate carbamoyltransferase catalytic subunit (298 aa).

Carbamoyl phosphate contacts are provided by arginine 53 and threonine 54. Lysine 81 contacts L-aspartate. Carbamoyl phosphate-binding residues include arginine 103, histidine 132, and glutamine 135. 2 residues coordinate L-aspartate: arginine 166 and arginine 218. Carbamoyl phosphate is bound by residues glycine 259 and proline 260.

Belongs to the aspartate/ornithine carbamoyltransferase superfamily. ATCase family. As to quaternary structure, heterododecamer (2C3:3R2) of six catalytic PyrB chains organized as two trimers (C3), and six regulatory PyrI chains organized as three dimers (R2).

It catalyses the reaction carbamoyl phosphate + L-aspartate = N-carbamoyl-L-aspartate + phosphate + H(+). The protein operates within pyrimidine metabolism; UMP biosynthesis via de novo pathway; (S)-dihydroorotate from bicarbonate: step 2/3. Functionally, catalyzes the condensation of carbamoyl phosphate and aspartate to form carbamoyl aspartate and inorganic phosphate, the committed step in the de novo pyrimidine nucleotide biosynthesis pathway. This Anaplasma marginale (strain St. Maries) protein is Aspartate carbamoyltransferase catalytic subunit.